A 277-amino-acid polypeptide reads, in one-letter code: Diaminopimelate epimerase (277 aa).

Residues asparagine 15 and asparagine 74 each contribute to the substrate site. Residue cysteine 83 is the Proton donor of the active site. Substrate-binding positions include 84–85, asparagine 159, asparagine 194, and 212–213; these read GN and ER. Cysteine 221 functions as the Proton acceptor in the catalytic mechanism. Substrate is bound at residue 222 to 223; that stretch reads GT.

Belongs to the diaminopimelate epimerase family. In terms of assembly, homodimer.

Its subcellular location is the cytoplasm. The enzyme catalyses (2S,6S)-2,6-diaminopimelate = meso-2,6-diaminopimelate. It functions in the pathway amino-acid biosynthesis; L-lysine biosynthesis via DAP pathway; DL-2,6-diaminopimelate from LL-2,6-diaminopimelate: step 1/1. In terms of biological role, catalyzes the stereoinversion of LL-2,6-diaminopimelate (L,L-DAP) to meso-diaminopimelate (meso-DAP), a precursor of L-lysine and an essential component of the bacterial peptidoglycan. This chain is Diaminopimelate epimerase, found in Corynebacterium glutamicum (strain R).